A 75-amino-acid polypeptide reads, in one-letter code: Small integral membrane protein 15 (75 aa).

Residues 21 to 41 (YGFLITVLLALTPLFLASAVL) traverse the membrane as a helical segment. A coiled-coil region spans residues 49-75 (IEAKERDQKKKQKRQENIAKAKRTKKD). A compositionally biased stretch (basic and acidic residues) spans 52–67 (KERDQKKKQKRQENIA). The segment at 52-75 (KERDQKKKQKRQENIAKAKRTKKD) is disordered.

Belongs to the SMIM15 family.

It is found in the membrane. This chain is Small integral membrane protein 15 (smim15), found in Xenopus laevis (African clawed frog).